A 95-amino-acid polypeptide reads, in one-letter code: Large ribosomal subunit protein eL37x (95 aa).

Zn(2+) contacts are provided by cysteine 19, cysteine 22, cysteine 34, and cysteine 37. Residues 19–37 form a C4-type zinc finger; the sequence is CVRCGRRSFHIQKSRCSAC. The segment at 73–95 is disordered; it reads RFKTGFREGTEAKPRSKASASSA. Basic and acidic residues predominate over residues 77 to 86; it reads GFREGTEAKP.

The protein belongs to the eukaryotic ribosomal protein eL37 family. Zn(2+) serves as cofactor.

Its function is as follows. Binds to the 23S rRNA. In Arabidopsis thaliana (Mouse-ear cress), this protein is Large ribosomal subunit protein eL37x (RPL37C).